The following is a 327-amino-acid chain: Phosphoenolpyruvate transferase (327 aa).

Position 59 (Asp59) interacts with 7,8-didemethyl-8-hydroxy-5-deazariboflavin.

This sequence belongs to the CofD family. As to quaternary structure, homodimer. Mg(2+) is required as a cofactor.

The catalysed reaction is enolpyruvoyl-2-diphospho-5'-guanosine + 7,8-didemethyl-8-hydroxy-5-deazariboflavin = dehydro coenzyme F420-0 + GMP + H(+). It functions in the pathway cofactor biosynthesis; coenzyme F420 biosynthesis. Its function is as follows. Catalyzes the transfer of the phosphoenolpyruvate moiety from enoylpyruvoyl-2-diphospho-5'-guanosine (EPPG) to 7,8-didemethyl-8-hydroxy-5-deazariboflavin (FO) with the formation of dehydro coenzyme F420-0 and GMP. This chain is Phosphoenolpyruvate transferase, found in Mycolicibacterium smegmatis (strain ATCC 700084 / mc(2)155) (Mycobacterium smegmatis).